The following is a 124-amino-acid chain: Riboflavin kinase (124 aa).

A CDP-binding site is contributed by 10–15 (GLGKAA). Residues threonine 39 and asparagine 41 each coordinate Mg(2+). Positions 93 and 101 each coordinate FMN. Position 106 to 109 (106 to 109 (DKLR)) interacts with CDP.

This sequence belongs to the archaeal riboflavin kinase family. Requires Mg(2+) as cofactor.

It catalyses the reaction riboflavin + CTP = CDP + FMN + H(+). Its pathway is cofactor biosynthesis; FMN biosynthesis; FMN from riboflavin (CTP route): step 1/1. Catalyzes the CTP-dependent phosphorylation of riboflavin (vitamin B2) to form flavin mononucleotide (FMN). This Methanobrevibacter smithii (strain ATCC 35061 / DSM 861 / OCM 144 / PS) protein is Riboflavin kinase.